A 422-amino-acid polypeptide reads, in one-letter code: MEGHKAEEEVLDILRLNVGGCIYTARRESLCRFKDSMLASMFSGRFPLKTDESGACVIDRDGHLFKYLLDYLHGEVHIPTEEQTRVALQEEADYFGIPYPYSLSDHLANEMETYSLRSNIELKKALTDFCDSYGLVCNKPTVWVLHYLNTSGASCESRIIGVYSTKTDGTDAIDKQLGGRIHSKSIFKREAGNNVQYIWSDYSVAELKKMMDAFDAWEGKGVSYWRVPHELIECWTLEERPLLGSLSHMAPIRKRRLIVNEEEEEGVNCKTGPKPVRFLGPSTSTQIKVKNSASIRVSPASAPQPWPRATANLAAGGRAVQRSAQSKVPTPVGTGLPEHPQAAQGPGAPENGATHLPPAKVLLSDKTATPHRVIKLRRTPLCATGSSLPACTTPRPAGPPEPPPDALSPLGTWTENGQDQTK.

Residues 12–80 (DILRLNVGGC…YLHGEVHIPT (69 aa)) enclose the BTB domain. 2 disordered regions span residues 289–357 (VKNS…THLP) and 376–422 (LRRT…DQTK). Over residues 396–406 (PAGPPEPPPDA) the composition is skewed to pro residues. A compositionally biased stretch (polar residues) spans 413–422 (WTENGQDQTK).

This is BTB/POZ domain-containing protein KCTD18 (KCTD18) from Bos taurus (Bovine).